The primary structure comprises 56 residues: Large ribosomal subunit protein bL32 (56 aa).

Belongs to the bacterial ribosomal protein bL32 family.

The chain is Large ribosomal subunit protein bL32 from Synechococcus sp. (strain CC9311).